A 192-amino-acid polypeptide reads, in one-letter code: Pyridoxal 5'-phosphate synthase subunit PdxT (192 aa).

Residue 46-48 (GES) coordinates L-glutamine. Residue cysteine 78 is the Nucleophile of the active site. L-glutamine contacts are provided by residues arginine 106 and 135–136 (IR). Catalysis depends on charge relay system residues histidine 171 and glutamate 173.

The protein belongs to the glutaminase PdxT/SNO family. As to quaternary structure, in the presence of PdxS, forms a dodecamer of heterodimers. Only shows activity in the heterodimer.

It carries out the reaction aldehydo-D-ribose 5-phosphate + D-glyceraldehyde 3-phosphate + L-glutamine = pyridoxal 5'-phosphate + L-glutamate + phosphate + 3 H2O + H(+). It catalyses the reaction L-glutamine + H2O = L-glutamate + NH4(+). It participates in cofactor biosynthesis; pyridoxal 5'-phosphate biosynthesis. Catalyzes the hydrolysis of glutamine to glutamate and ammonia as part of the biosynthesis of pyridoxal 5'-phosphate. The resulting ammonia molecule is channeled to the active site of PdxS. The sequence is that of Pyridoxal 5'-phosphate synthase subunit PdxT from Kosmotoga olearia (strain ATCC BAA-1733 / DSM 21960 / TBF 19.5.1).